Reading from the N-terminus, the 466-residue chain is 3-isopropylmalate dehydratase large subunit (466 aa).

Cys-347, Cys-407, and Cys-410 together coordinate [4Fe-4S] cluster.

It belongs to the aconitase/IPM isomerase family. LeuC type 1 subfamily. As to quaternary structure, heterodimer of LeuC and LeuD. [4Fe-4S] cluster serves as cofactor.

It catalyses the reaction (2R,3S)-3-isopropylmalate = (2S)-2-isopropylmalate. It participates in amino-acid biosynthesis; L-leucine biosynthesis; L-leucine from 3-methyl-2-oxobutanoate: step 2/4. Catalyzes the isomerization between 2-isopropylmalate and 3-isopropylmalate, via the formation of 2-isopropylmaleate. The protein is 3-isopropylmalate dehydratase large subunit of Vibrio campbellii (strain ATCC BAA-1116).